A 395-amino-acid chain; its full sequence is Elongation factor Tu (395 aa).

Residues 10–204 form the tr-type G domain; the sequence is KPHVNIGTIG…EVDAYIPTPE (195 aa). A G1 region spans residues 19 to 26; that stretch reads GHVDHGKT. Residue 19–26 participates in GTP binding; the sequence is GHVDHGKT. T26 contributes to the Mg(2+) binding site. Residues 60–64 are G2; it reads GITIS. Positions 81–84 are G3; it reads DCPG. GTP is bound by residues 81–85 and 136–139; these read DCPGH and NKCD. The interval 136–139 is G4; that stretch reads NKCD. The tract at residues 174 to 176 is G5; the sequence is SAL.

The protein belongs to the TRAFAC class translation factor GTPase superfamily. Classic translation factor GTPase family. EF-Tu/EF-1A subfamily. In terms of assembly, monomer.

It localises to the cytoplasm. The enzyme catalyses GTP + H2O = GDP + phosphate + H(+). In terms of biological role, GTP hydrolase that promotes the GTP-dependent binding of aminoacyl-tRNA to the A-site of ribosomes during protein biosynthesis. This Bacillus cereus (strain G9842) protein is Elongation factor Tu.